An 862-amino-acid chain; its full sequence is DNA mismatch repair protein MutS (862 aa).

603-610 provides a ligand contact to ATP; sequence GPNMSGKS.

The protein belongs to the DNA mismatch repair MutS family.

Its function is as follows. This protein is involved in the repair of mismatches in DNA. It is possible that it carries out the mismatch recognition step. This protein has a weak ATPase activity. The polypeptide is DNA mismatch repair protein MutS (Bacillus velezensis (strain DSM 23117 / BGSC 10A6 / LMG 26770 / FZB42) (Bacillus amyloliquefaciens subsp. plantarum)).